Consider the following 95-residue polypeptide: Co-chaperonin GroES (95 aa).

Belongs to the GroES chaperonin family. As to quaternary structure, heptamer of 7 subunits arranged in a ring. Interacts with the chaperonin GroEL.

It localises to the cytoplasm. In terms of biological role, together with the chaperonin GroEL, plays an essential role in assisting protein folding. The GroEL-GroES system forms a nano-cage that allows encapsulation of the non-native substrate proteins and provides a physical environment optimized to promote and accelerate protein folding. GroES binds to the apical surface of the GroEL ring, thereby capping the opening of the GroEL channel. The protein is Co-chaperonin GroES of Geobacter sulfurreducens (strain ATCC 51573 / DSM 12127 / PCA).